We begin with the raw amino-acid sequence, 235 residues long: Glycerol-3-phosphate acyltransferase (235 aa).

6 helical membrane-spanning segments follow: residues 4–24 (LLAILAVSYLIGSIPTGIMAG), 56–76 (TVTLIDIIKGVVAAVSVVAFF), 94–114 (LLAGMSAVVGHVFTVFAGFKG), 124–144 (MLIGIAPVSMLMVIGIFLLTI), 152–172 (VASMLAAVAFPLIIAIRKYIF), and 191–211 (FHDSLDYHLMIFGLIVALGIL).

It belongs to the PlsY family. As to quaternary structure, probably interacts with PlsX.

The protein resides in the cell inner membrane. The catalysed reaction is an acyl phosphate + sn-glycerol 3-phosphate = a 1-acyl-sn-glycero-3-phosphate + phosphate. It functions in the pathway lipid metabolism; phospholipid metabolism. In terms of biological role, catalyzes the transfer of an acyl group from acyl-phosphate (acyl-PO(4)) to glycerol-3-phosphate (G3P) to form lysophosphatidic acid (LPA). This enzyme utilizes acyl-phosphate as fatty acyl donor, but not acyl-CoA or acyl-ACP. This is Glycerol-3-phosphate acyltransferase from Chlorobium limicola (strain DSM 245 / NBRC 103803 / 6330).